The sequence spans 396 residues: Aspartate aminotransferase (396 aa).

The L-aspartate site is built by Gly34, Trp130, and Asn183. Lys246 is subject to N6-(pyridoxal phosphate)lysine. Arg374 contributes to the L-aspartate binding site.

This sequence belongs to the class-I pyridoxal-phosphate-dependent aminotransferase family. In terms of assembly, homodimer. Pyridoxal 5'-phosphate is required as a cofactor.

The protein localises to the cytoplasm. It catalyses the reaction L-aspartate + 2-oxoglutarate = oxaloacetate + L-glutamate. The chain is Aspartate aminotransferase (aspC) from Escherichia coli (strain K12).